A 108-amino-acid polypeptide reads, in one-letter code: Circadian clock oscillator protein KaiB (108 aa).

The protein belongs to the KaiB family. In terms of assembly, undergoes a major conformational rearrangment; in the free state forms homotetramers with 2 dimers. When bound to the CI domain of KaiC, KaiA or CikA switches to a monomeric thioredoxin-fold (KaiB(fs)). The KaiABC complex composition changes during the circadian cycle to control KaiC phosphorylation. Complexes KaiC(6), KaiA(2-4):KaiC(6), KaiB(6):KaiC(6) and KaiC(6):KaiB(6):KaiA(12) are among the most important forms, many form cooperatively. Binds to KaiA; 1 KaiB(fs) binds to the KaiA homodimer. Binds to the B-loop in the CI domain of KaiC; SasA and KaiB compete to bind to the CI domain. Binding to KaiC CI domain occurs 1:1. KaiA and CikA bind to the same region of KaiB(fs) and therefore compete.

Its function is as follows. Key component of the KaiABC oscillator complex, which constitutes the main circadian regulator in cyanobacteria. Its composition changes during the circadian cycle to control KaiC phosphorylation. KaiA stimulates KaiC autophosphorylation, while KaiB sequesters KaiA, leading to KaiC autodephosphorylation. KaiA binding to KaiC yields KaiA(2-4):KaiC(6) complexes which stimulate KaiC autophosphorylation. Phospho-Ser-431 KaiC accumulation triggers binding of KaiB to form the KaiB(6):KaiC(6) complex, leading to changes in the output regulators CikA and SasA. KaiB switches to a thioredoxin-like fold (KaiB(fs)) in complex with KaiC. KaiB(6):KaiC(6) formation exposes a site for KaiA binding that sequesters KaiA from the CII domain, making the KaiC(6):KaiB(6):KaiA(12) complex that results in KaiC autodephosphorylation. Complete dephosphorylation of KaiC leads to dissociation of KaiA(2):KaiB(1), completing 1 cycle of the Kai oscillator. In terms of biological role, a metamorphic protein which reversibly switches between an inactive tetrameric fold and a rare, thioredoxin-like monomeric fold (KaiB(fs)). KaiB(fs) binds phospho-KaiC, KaiA and CikA. KaiA and CikA compete for binding to KaiB(fs), and KaiB(fs) and SasA compete for binding to KaiC, thus the clock oscillator and output signal pathway are tightly coupled. The protein is Circadian clock oscillator protein KaiB of Thermosynechococcus vestitus (strain NIES-2133 / IAM M-273 / BP-1).